The primary structure comprises 284 residues: 2-dehydro-3-deoxyphosphooctonate aldolase (284 aa).

Belongs to the KdsA family.

The protein resides in the cytoplasm. The enzyme catalyses D-arabinose 5-phosphate + phosphoenolpyruvate + H2O = 3-deoxy-alpha-D-manno-2-octulosonate-8-phosphate + phosphate. Its pathway is carbohydrate biosynthesis; 3-deoxy-D-manno-octulosonate biosynthesis; 3-deoxy-D-manno-octulosonate from D-ribulose 5-phosphate: step 2/3. It participates in bacterial outer membrane biogenesis; lipopolysaccharide biosynthesis. The chain is 2-dehydro-3-deoxyphosphooctonate aldolase from Aliivibrio fischeri (strain ATCC 700601 / ES114) (Vibrio fischeri).